Reading from the N-terminus, the 260-residue chain is 3'-5' ssDNA/RNA exonuclease TatD (260 aa).

The a divalent metal cation site is built by glutamate 91, histidine 127, and histidine 152.

This sequence belongs to the metallo-dependent hydrolases superfamily. TatD-type hydrolase family. TatD subfamily. In terms of assembly, monomer. It depends on Mg(2+) as a cofactor.

It is found in the cytoplasm. Functionally, 3'-5' exonuclease that prefers single-stranded DNA and RNA. May play a role in the H(2)O(2)-induced DNA damage repair. This is 3'-5' ssDNA/RNA exonuclease TatD from Enterobacter lignolyticus (strain SCF1).